Here is a 613-residue protein sequence, read N- to C-terminus: Protein ECM3 (613 aa).

Transmembrane regions (helical) follow at residues 10-30 (IWASVRPIIKIYLIIGVGFGL), 74-94 (GIICLTSVILFATGLGFAFIV), 106-126 (GGILAGGMFPNISDLPIAYLQ), and 143-163 (VANVIIFLAMFLICVFNLGGF). Residues 177-256 (DEENTLTNDD…PAIDDRSSNS (80 aa)) form a disordered region. 2 stretches are compositionally biased toward polar residues: residues 187-206 (SAQQPTQPIEGNSSSSSNQD) and 213-226 (ESTVPNSSQASYIS). 2 positions are modified to phosphoserine: Ser291 and Ser338. Positions 345 to 366 (RRRKSSISSQGAPSVLQADGTI) are disordered. Helical transmembrane passes span 432–452 (MAVILALIIAFIPWVKALFVT), 471–491 (FIMDFTSYVGAASVPFGLILL), 546–566 (MLLFVTAITWNLPTMTTLIYF), and 587–607 (FLMLQYPLMVVSLPFLVSYFI).

It is found in the endoplasmic reticulum membrane. May be involved in cell wall organization and biogenesis. In Saccharomyces cerevisiae (strain ATCC 204508 / S288c) (Baker's yeast), this protein is Protein ECM3 (ECM3).